We begin with the raw amino-acid sequence, 298 residues long: Small ribosomal subunit protein uS3 (298 aa).

The KH type-2 domain maps to 38–106; that stretch reads IRRRLSRGME…QVQLNILEVK (69 aa). The segment at 212-298 is disordered; it reads KQKQQESEVR…EPRADEKTEG (87 aa). Over residues 214–237 the composition is skewed to basic and acidic residues; that stretch reads KQQESEVRPPRGERGERGGRPERG. Over residues 265-278 the composition is skewed to polar residues; it reads GSAQSPEQAQTSGD.

It belongs to the universal ribosomal protein uS3 family. As to quaternary structure, part of the 30S ribosomal subunit. Forms a tight complex with proteins S10 and S14.

Functionally, binds the lower part of the 30S subunit head. Binds mRNA in the 70S ribosome, positioning it for translation. The chain is Small ribosomal subunit protein uS3 from Saccharopolyspora erythraea (strain ATCC 11635 / DSM 40517 / JCM 4748 / NBRC 13426 / NCIMB 8594 / NRRL 2338).